Consider the following 589-residue polypeptide: MERKSSLKVRVQKLGTSLSNMVMPNIGAFIAWGVAASLFIATGYLPNKALDTNVVGPMLKYVLPLLIGYTGGYNIHKQRGGVIGAIASFGAIAGSTVTMFIGAMIMGPLSAWILKKFDEKVQPKIRTGFEMLVNNFSLGLIGFALMVLAFFVIGPVVAQLTEWVGIGVEAIVKVHLLPLANLIIEPAKILFLNNALNHGIFTPLGTEQVAKVGKSVLFLLEANPGPGLGVLIAYAMFGKGSAKSSSWGAMIIHFFGGIHEIYFPYVMMKPAMFLAVIAGGLTGTFTFQTLGAGLTAPASPGSIIAIMGMSPKGWGPHLVVLAGVFAAAVASFLVASIILKSDNSDDDSLETAQAVTQAAKAESKGQAVTEPNLHSDITTDNIHQIIFACDAGMGSSAMGASILRDKVKKAGLDISVSNQAISNLQDTANTLIVTQEELADRAGQKTPRAVHVAVDNFLATSKYDDIIASLTNGKASGSENAAHSTQADSAEIDLNQIDAVVFAYGIAKGSATMGQETLRSIFKQNNVKIPVSTASYAHLSDYNAKNILLVTTIAQQGQAQQAAPNAQILVVDSLVTTPEYDKLVARMHK.

Residues 1–25 (MERKSSLKVRVQKLGTSLSNMVMPN) lie on the Cytoplasmic side of the membrane. Residues 14 to 347 (LGTSLSNMVM…ILKSDNSDDD (334 aa)) form the PTS EIIC type-2 domain. A helical membrane pass occupies residues 26–47 (IGAFIAWGVAASLFIATGYLPN). Over 48–51 (KALD) the chain is Extracellular. The chain crosses the membrane as a helical span at residues 52–73 (TNVVGPMLKYVLPLLIGYTGGY). Residues 74 to 136 (NIHKQRGGVI…TGFEMLVNNF (63 aa)) are Cytoplasmic-facing. A helical transmembrane segment spans residues 137-158 (SLGLIGFALMVLAFFVIGPVVA). The Extracellular segment spans residues 159-167 (QLTEWVGIG). A helical transmembrane segment spans residues 168–188 (VEAIVKVHLLPLANLIIEPAK). Topologically, residues 189–275 (ILFLNNALNH…VMMKPAMFLA (87 aa)) are cytoplasmic. Residues 276–295 (VIAGGLTGTFTFQTLGAGLT) form a helical membrane-spanning segment. The Extracellular portion of the chain corresponds to 296 to 317 (APASPGSIIAIMGMSPKGWGPH). The chain crosses the membrane as a helical span at residues 318–339 (LVVLAGVFAAAVASFLVASIIL). At 340 to 589 (KSDNSDDDSL…YDKLVARMHK (250 aa)) the chain is on the cytoplasmic side. In terms of domain architecture, PTS EIIB type-2 spans 383-478 (HQIIFACDAG…SLTNGKASGS (96 aa)). Cys-389 serves as the catalytic Phosphocysteine intermediate; for EIIB activity. The residue at position 389 (Cys-389) is a Phosphocysteine; by EIIA.

As to quaternary structure, homodimer.

The protein resides in the cell membrane. It catalyses the reaction D-mannitol(out) + N(pros)-phospho-L-histidyl-[protein] = D-mannitol 1-phosphate(in) + L-histidyl-[protein]. Functionally, the phosphoenolpyruvate-dependent sugar phosphotransferase system (sugar PTS), a major carbohydrate active transport system, catalyzes the phosphorylation of incoming sugar substrates concomitantly with their translocation across the cell membrane. The enzyme II CmtAB PTS system is involved in D-mannitol transport. This Streptococcus mutans serotype c (strain ATCC 700610 / UA159) protein is PTS system mannitol-specific EIICB component.